The following is a 414-amino-acid chain: Serine/threonine transporter SstT (414 aa).

At Thr-2–His-15 the chain is on the cytoplasmic side. The helical transmembrane segment at Gly-16–Ser-36 threads the bilayer. The Periplasmic portion of the chain corresponds to Lys-37–Leu-45. A helical membrane pass occupies residues Leu-46–Val-66. The Cytoplasmic segment spans residues Met-67–Pro-83. The chain crosses the membrane as a helical span at residues Ile-84–Phe-104. Over Ala-105 to Asp-142 the chain is Periplasmic. Residues Ala-143–Leu-163 form a helical membrane-spanning segment. Residues Arg-164–Asn-179 lie on the Cytoplasmic side of the membrane. The chain crosses the membrane as a helical span at residues Ala-180 to Val-200. Topologically, residues Ser-201–Gln-217 are periplasmic. A helical membrane pass occupies residues Leu-218–Val-238. Residues Trp-239–Asn-299 are Cytoplasmic-facing. Residues Met-300–Ile-320 form a helical membrane-spanning segment. Over Pro-321–Ser-331 the chain is Periplasmic. Residues Val-332–Ile-352 form a helical membrane-spanning segment. Over Pro-353–Asn-414 the chain is Cytoplasmic.

This sequence belongs to the dicarboxylate/amino acid:cation symporter (DAACS) (TC 2.A.23) family.

It localises to the cell inner membrane. The enzyme catalyses L-serine(in) + Na(+)(in) = L-serine(out) + Na(+)(out). It catalyses the reaction L-threonine(in) + Na(+)(in) = L-threonine(out) + Na(+)(out). Its function is as follows. Involved in the import of serine and threonine into the cell, with the concomitant import of sodium (symport system). The polypeptide is Serine/threonine transporter SstT (Shigella flexneri).